The following is a 384-amino-acid chain: 8-amino-7-oxononanoate synthase (384 aa).

Residue arginine 21 coordinates substrate. 108 to 109 (GF) contacts pyridoxal 5'-phosphate. Histidine 133 serves as a coordination point for substrate. Pyridoxal 5'-phosphate contacts are provided by serine 179, histidine 207, and threonine 233. Lysine 236 carries the post-translational modification N6-(pyridoxal phosphate)lysine. Threonine 352 is a binding site for substrate.

It belongs to the class-II pyridoxal-phosphate-dependent aminotransferase family. BioF subfamily. Homodimer. Requires pyridoxal 5'-phosphate as cofactor.

The catalysed reaction is 6-carboxyhexanoyl-[ACP] + L-alanine + H(+) = (8S)-8-amino-7-oxononanoate + holo-[ACP] + CO2. It participates in cofactor biosynthesis; biotin biosynthesis. Functionally, catalyzes the decarboxylative condensation of pimeloyl-[acyl-carrier protein] and L-alanine to produce 8-amino-7-oxononanoate (AON), [acyl-carrier protein], and carbon dioxide. The protein is 8-amino-7-oxononanoate synthase of Shigella dysenteriae serotype 1 (strain Sd197).